The primary structure comprises 83 residues: Normal mucosa of esophagus-specific gene 1 protein (83 aa).

This sequence belongs to the complex I NDUFA4 subunit family. Strongly expressed in vertebrae, brain, intestine and stomach.

The protein resides in the nucleus. This Mus musculus (Mouse) protein is Normal mucosa of esophagus-specific gene 1 protein (Nmes1).